The following is a 558-amino-acid chain: 5-aminolevulinate synthase, mitochondrial (558 aa).

Residues 1-25 (MERVVKLAAKHCPFVSKADPSALRR) constitute a mitochondrion transit peptide. The interval 103–124 (TTTPVTKKHQMPKHYASDLNGV) is disordered. Residues arginine 152, serine 265, and lysine 284 each contribute to the substrate site. 3 residues coordinate pyridoxal 5'-phosphate: serine 317, histidine 345, and threonine 374. Lysine 377 is a catalytic residue. Position 377 is an N6-(pyridoxal phosphate)lysine (lysine 377). Positions 406 and 407 each coordinate pyridoxal 5'-phosphate. Threonine 492 contacts substrate.

This sequence belongs to the class-II pyridoxal-phosphate-dependent aminotransferase family. As to quaternary structure, homodimer. Pyridoxal 5'-phosphate is required as a cofactor.

The protein localises to the mitochondrion matrix. The catalysed reaction is succinyl-CoA + glycine + H(+) = 5-aminolevulinate + CO2 + CoA. It functions in the pathway porphyrin-containing compound metabolism; protoporphyrin-IX biosynthesis; 5-aminolevulinate from glycine: step 1/1. In terms of biological role, catalyzes the synthesis of 5-aminolevulinate (ALA) from succinyl-CoA and glycine, the first and rate-limiting step in heme biosynthesis. The polypeptide is 5-aminolevulinate synthase, mitochondrial (Schizosaccharomyces pombe (strain 972 / ATCC 24843) (Fission yeast)).